The sequence spans 880 residues: Alanine--tRNA ligase (880 aa).

Residues His567, His571, Cys669, and His673 each contribute to the Zn(2+) site.

Belongs to the class-II aminoacyl-tRNA synthetase family. Requires Zn(2+) as cofactor.

It is found in the cytoplasm. The enzyme catalyses tRNA(Ala) + L-alanine + ATP = L-alanyl-tRNA(Ala) + AMP + diphosphate. Functionally, catalyzes the attachment of alanine to tRNA(Ala) in a two-step reaction: alanine is first activated by ATP to form Ala-AMP and then transferred to the acceptor end of tRNA(Ala). Also edits incorrectly charged Ser-tRNA(Ala) and Gly-tRNA(Ala) via its editing domain. The polypeptide is Alanine--tRNA ligase (Bacillus anthracis).